We begin with the raw amino-acid sequence, 534 residues long: CTP synthase (534 aa).

The tract at residues 1–267 (MTKYIFVTGG…DQIVCDHLKL (267 aa)) is amidoligase domain. S13 contacts CTP. S13 lines the UTP pocket. 14–19 (SIGKGI) is a binding site for ATP. Residue Y54 participates in L-glutamine binding. An ATP-binding site is contributed by D71. Mg(2+) contacts are provided by D71 and E141. Residues 148–150 (DIE), 188–193 (KTKPTQ), and K224 each bind CTP. Residues 188-193 (KTKPTQ) and K224 contribute to the UTP site. Positions 292 to 534 (KIALVGKYVE…FVTAAVENMK (243 aa)) constitute a Glutamine amidotransferase type-1 domain. Residue G354 coordinates L-glutamine. C381 functions as the Nucleophile; for glutamine hydrolysis in the catalytic mechanism. Residues 382–385 (LGMQ), E405, and R463 contribute to the L-glutamine site. Active-site residues include H508 and E510.

It belongs to the CTP synthase family. As to quaternary structure, homotetramer.

It catalyses the reaction UTP + L-glutamine + ATP + H2O = CTP + L-glutamate + ADP + phosphate + 2 H(+). The enzyme catalyses L-glutamine + H2O = L-glutamate + NH4(+). It carries out the reaction UTP + NH4(+) + ATP = CTP + ADP + phosphate + 2 H(+). It functions in the pathway pyrimidine metabolism; CTP biosynthesis via de novo pathway; CTP from UDP: step 2/2. Its activity is regulated as follows. Allosterically activated by GTP, when glutamine is the substrate; GTP has no effect on the reaction when ammonia is the substrate. The allosteric effector GTP functions by stabilizing the protein conformation that binds the tetrahedral intermediate(s) formed during glutamine hydrolysis. Inhibited by the product CTP, via allosteric rather than competitive inhibition. In terms of biological role, catalyzes the ATP-dependent amination of UTP to CTP with either L-glutamine or ammonia as the source of nitrogen. Regulates intracellular CTP levels through interactions with the four ribonucleotide triphosphates. This chain is CTP synthase, found in Streptococcus agalactiae serotype Ia (strain ATCC 27591 / A909 / CDC SS700).